The primary structure comprises 268 residues: Undecaprenyl-diphosphatase (268 aa).

The next 8 helical transmembrane spans lie at 11-33, 46-66, 84-104, 107-127, 144-164, 185-205, 213-233, and 246-266; these read FLGL…LLLI, FEVL…SAKL, LGVL…HGFI, VLFE…FILL, YPLP…IPGV, AEFS…YDLF, FNDG…GVFV, and FALF…ALII.

It belongs to the UppP family.

It is found in the cell inner membrane. The catalysed reaction is di-trans,octa-cis-undecaprenyl diphosphate + H2O = di-trans,octa-cis-undecaprenyl phosphate + phosphate + H(+). Catalyzes the dephosphorylation of undecaprenyl diphosphate (UPP). Confers resistance to bacitracin. In Brucella suis (strain ATCC 23445 / NCTC 10510), this protein is Undecaprenyl-diphosphatase.